A 355-amino-acid polypeptide reads, in one-letter code: UDP-N-acetylglucosamine--N-acetylmuramyl-(pentapeptide) pyrophosphoryl-undecaprenol N-acetylglucosamine transferase (355 aa).

Residues 15 to 17 (TGG), Asn-127, Arg-163, Ser-191, Ile-244, 263 to 268 (ALTVSE), and Gln-288 contribute to the UDP-N-acetyl-alpha-D-glucosamine site.

This sequence belongs to the glycosyltransferase 28 family. MurG subfamily.

It is found in the cell inner membrane. It catalyses the reaction di-trans,octa-cis-undecaprenyl diphospho-N-acetyl-alpha-D-muramoyl-L-alanyl-D-glutamyl-meso-2,6-diaminopimeloyl-D-alanyl-D-alanine + UDP-N-acetyl-alpha-D-glucosamine = di-trans,octa-cis-undecaprenyl diphospho-[N-acetyl-alpha-D-glucosaminyl-(1-&gt;4)]-N-acetyl-alpha-D-muramoyl-L-alanyl-D-glutamyl-meso-2,6-diaminopimeloyl-D-alanyl-D-alanine + UDP + H(+). The protein operates within cell wall biogenesis; peptidoglycan biosynthesis. In terms of biological role, cell wall formation. Catalyzes the transfer of a GlcNAc subunit on undecaprenyl-pyrophosphoryl-MurNAc-pentapeptide (lipid intermediate I) to form undecaprenyl-pyrophosphoryl-MurNAc-(pentapeptide)GlcNAc (lipid intermediate II). The protein is UDP-N-acetylglucosamine--N-acetylmuramyl-(pentapeptide) pyrophosphoryl-undecaprenol N-acetylglucosamine transferase of Cronobacter sakazakii (strain ATCC BAA-894) (Enterobacter sakazakii).